Here is a 135-residue protein sequence, read N- to C-terminus: D-ribose pyranase (135 aa).

The active-site Proton donor is the His20. Substrate contacts are provided by residues Asp28, His102, and 124-126 (YAN).

It belongs to the RbsD / FucU family. RbsD subfamily. As to quaternary structure, homodecamer.

It is found in the cytoplasm. It catalyses the reaction beta-D-ribopyranose = beta-D-ribofuranose. Its pathway is carbohydrate metabolism; D-ribose degradation; D-ribose 5-phosphate from beta-D-ribopyranose: step 1/2. In terms of biological role, catalyzes the interconversion of beta-pyran and beta-furan forms of D-ribose. The chain is D-ribose pyranase from Rhodopirellula baltica (strain DSM 10527 / NCIMB 13988 / SH1).